The sequence spans 93 residues: Small ribosomal subunit protein uS19 (93 aa).

It belongs to the universal ribosomal protein uS19 family.

Functionally, protein S19 forms a complex with S13 that binds strongly to the 16S ribosomal RNA. This chain is Small ribosomal subunit protein uS19, found in Ruminiclostridium cellulolyticum (strain ATCC 35319 / DSM 5812 / JCM 6584 / H10) (Clostridium cellulolyticum).